Consider the following 135-residue polypeptide: L-ectoine synthase (135 aa).

The protein belongs to the ectoine synthase family.

It catalyses the reaction (2S)-4-acetamido-2-aminobutanoate = L-ectoine + H2O. Its pathway is amine and polyamine biosynthesis; ectoine biosynthesis; L-ectoine from L-aspartate 4-semialdehyde: step 3/3. Functionally, catalyzes the circularization of gamma-N-acetyl-alpha,gamma-diaminobutyric acid (ADABA) to ectoine (1,4,5,6-tetrahydro-2-methyl-4-pyrimidine carboxylic acid), which is an excellent osmoprotectant. In Saccharopolyspora erythraea (strain ATCC 11635 / DSM 40517 / JCM 4748 / NBRC 13426 / NCIMB 8594 / NRRL 2338), this protein is L-ectoine synthase.